The sequence spans 355 residues: UDP-N-acetylglucosamine--N-acetylmuramyl-(pentapeptide) pyrophosphoryl-undecaprenol N-acetylglucosamine transferase (355 aa).

Residues 15–17 (TGG), Asn127, Arg163, Ser191, Ile244, 263–268 (ALTVSE), and Gln288 each bind UDP-N-acetyl-alpha-D-glucosamine.

It belongs to the glycosyltransferase 28 family. MurG subfamily.

It is found in the cell inner membrane. The enzyme catalyses di-trans,octa-cis-undecaprenyl diphospho-N-acetyl-alpha-D-muramoyl-L-alanyl-D-glutamyl-meso-2,6-diaminopimeloyl-D-alanyl-D-alanine + UDP-N-acetyl-alpha-D-glucosamine = di-trans,octa-cis-undecaprenyl diphospho-[N-acetyl-alpha-D-glucosaminyl-(1-&gt;4)]-N-acetyl-alpha-D-muramoyl-L-alanyl-D-glutamyl-meso-2,6-diaminopimeloyl-D-alanyl-D-alanine + UDP + H(+). The protein operates within cell wall biogenesis; peptidoglycan biosynthesis. In terms of biological role, cell wall formation. Catalyzes the transfer of a GlcNAc subunit on undecaprenyl-pyrophosphoryl-MurNAc-pentapeptide (lipid intermediate I) to form undecaprenyl-pyrophosphoryl-MurNAc-(pentapeptide)GlcNAc (lipid intermediate II). This is UDP-N-acetylglucosamine--N-acetylmuramyl-(pentapeptide) pyrophosphoryl-undecaprenol N-acetylglucosamine transferase from Salmonella paratyphi A (strain ATCC 9150 / SARB42).